Reading from the N-terminus, the 428-residue chain is Dual-specificity RNA methyltransferase RlmN (428 aa).

The segment covering 1-17 (MPLHRVEALGEPQDRTG) has biased composition (basic and acidic residues). The interval 1–44 (MPLHRVEALGEPQDRTGKTFSGRTNGPISSPLTDTERRMSIPQN) is disordered. Residues 18-33 (KTFSGRTNGPISSPLT) show a composition bias toward polar residues. Glu-136 functions as the Proton acceptor in the catalytic mechanism. The 240-residue stretch at 142 to 381 (EDDRGALCVS…APIRMPRGRD (240 aa)) folds into the Radical SAM core domain. The cysteines at positions 149 and 386 are disulfide-linked. [4Fe-4S] cluster-binding residues include Cys-156, Cys-160, and Cys-163. S-adenosyl-L-methionine contacts are provided by residues 212–213 (GE), Ser-244, 266–268 (SLH), and Asn-343. The S-methylcysteine intermediate role is filled by Cys-386.

Belongs to the radical SAM superfamily. RlmN family. The cofactor is [4Fe-4S] cluster.

The protein localises to the cytoplasm. It carries out the reaction adenosine(2503) in 23S rRNA + 2 reduced [2Fe-2S]-[ferredoxin] + 2 S-adenosyl-L-methionine = 2-methyladenosine(2503) in 23S rRNA + 5'-deoxyadenosine + L-methionine + 2 oxidized [2Fe-2S]-[ferredoxin] + S-adenosyl-L-homocysteine. The catalysed reaction is adenosine(37) in tRNA + 2 reduced [2Fe-2S]-[ferredoxin] + 2 S-adenosyl-L-methionine = 2-methyladenosine(37) in tRNA + 5'-deoxyadenosine + L-methionine + 2 oxidized [2Fe-2S]-[ferredoxin] + S-adenosyl-L-homocysteine. Specifically methylates position 2 of adenine 2503 in 23S rRNA and position 2 of adenine 37 in tRNAs. m2A2503 modification seems to play a crucial role in the proofreading step occurring at the peptidyl transferase center and thus would serve to optimize ribosomal fidelity. The protein is Dual-specificity RNA methyltransferase RlmN of Rhodospirillum rubrum (strain ATCC 11170 / ATH 1.1.1 / DSM 467 / LMG 4362 / NCIMB 8255 / S1).